The chain runs to 242 residues: MSMLCYTLIIAFLIGIWAAPQSEDNVPLGSPATSDLSDTSCAQTHEGLKTSRNTDQRHPAPKKVDDQEPGSVANIIVDPKLFQKRQFQSSRVLFSTQPPPLSRDEQSVEFLNNEDALNRNIQAKRQNHPVHDLGEHSVCDSISEWVTKTTATDIKGNTVTVEVDVNLNNEVYKQYFFETKCRNPNPVPSGCRGIDSRLWNSYCTTTQTFVKALTMEGNQASWRFIRIDTACVCVITKKTDNL.

An N-terminal signal peptide occupies residues 1–18 (MSMLCYTLIIAFLIGIWA). Residues 19 to 125 (APQSEDNVPL…ALNRNIQAKR (107 aa)) constitute a propeptide that is removed on maturation. Positions 45–69 (HEGLKTSRNTDQRHPAPKKVDDQEP) are disordered. The segment covering 46–66 (EGLKTSRNTDQRHPAPKKVDD) has biased composition (basic and acidic residues). 3 disulfide bridges follow: Cys139–Cys203, Cys181–Cys231, and Cys191–Cys233.

It belongs to the NGF-beta family. In terms of assembly, homodimer; non-covalently linked. In terms of tissue distribution, expressed by the venom gland.

Its subcellular location is the secreted. Nerve growth factor is important for the development and maintenance of the sympathetic and sensory nervous systems. It stimulates division and differentiation of sympathetic and embryonic sensory neurons as well as basal forebrain cholinergic neurons in the brain. Its relevance in the snake venom is not clear. However, it has been shown to inhibit metalloproteinase-dependent proteolysis of platelet glycoprotein Ib alpha, suggesting a metalloproteinase inhibition to prevent metalloprotease autodigestion and/or protection against prey proteases. Binds a lipid between the two protein chains in the homodimer. The lipid-bound form promotes histamine relase from mouse mast cells, contrary to the lipid-free form. This Pseudechis australis (Mulga snake) protein is Venom nerve growth factor 3.